We begin with the raw amino-acid sequence, 283 residues long: Digeranylgeranylglyceryl phosphate synthase (283 aa).

A run of 8 helical transmembrane segments spans residues 5-27 (VEIIRPGNVIMAIIAVILVAILA), 37-57 (AMLAVFFAMSAGNVINDYFDY), 85-105 (LLFILAAIVGFLISCLVDTWI), 128-148 (PLIGNLTVGFMTGLCFIFAGY), 152-172 (EGLIIYESYLLAFFALIMTTA), 203-223 (AIIAISLIIIDCALCPLLYIY), 228-248 (INYLIVVSIAVLIFLYGAVLL), and 263-283 (LKTGMLIAFIAFAIGTFTITF).

It belongs to the UbiA prenyltransferase family. DGGGP synthase subfamily. It depends on Mg(2+) as a cofactor.

It is found in the cell membrane. The catalysed reaction is sn-3-O-(geranylgeranyl)glycerol 1-phosphate + (2E,6E,10E)-geranylgeranyl diphosphate = 2,3-bis-O-(geranylgeranyl)-sn-glycerol 1-phosphate + diphosphate. It functions in the pathway membrane lipid metabolism; glycerophospholipid metabolism. Functionally, prenyltransferase that catalyzes the transfer of the geranylgeranyl moiety of geranylgeranyl diphosphate (GGPP) to the C2 hydroxyl of (S)-3-O-geranylgeranylglyceryl phosphate (GGGP). This reaction is the second ether-bond-formation step in the biosynthesis of archaeal membrane lipids. The chain is Digeranylgeranylglyceryl phosphate synthase from Methanobrevibacter smithii (strain ATCC 35061 / DSM 861 / OCM 144 / PS).